Consider the following 493-residue polypeptide: Acetylcholine receptor subunit beta-type unc-29 (493 aa).

The signal sequence occupies residues 1–26 (MRTNRLSWILVLSVVIFLVIINTINA). Residues asparagine 25 and asparagine 50 are each glycosylated (N-linked (GlcNAc...) asparagine). At 27–232 (SDDEERLMVD…QVRIRRKTLF (206 aa)) the chain is on the extracellular side. A disulfide bridge connects residues cysteine 155 and cysteine 169. 3 helical membrane passes run 233 to 254 (YTVV…VFFL), 262 to 280 (ITLT…LLVS), and 296 to 317 (YLLL…IINV). Residues 318–445 (YFRGPRTHRM…WKYVAMIIDR (128 aa)) lie on the Cytoplasmic side of the membrane. The helical transmembrane segment at 446 to 466 (LLLYVFFGITVGGTCGILFSA) threads the bilayer.

Belongs to the ligand-gated ion channel (TC 1.A.9) family. Acetylcholine receptor (TC 1.A.9.1) subfamily. As to quaternary structure, interacts with lev-1. Component of nicotinic acetylcholine receptor composed of 2 non-alpha subunits lev-1 and unc-29, and 3 alpha subunits unc-38, unc-63 and lev-8. Interacts with oig-4. Interacts with crld-1.

The protein resides in the postsynaptic cell membrane. Its subcellular location is the cell membrane. Functionally, non-alpha subunit of nicotinic acetylcholine receptor (nAChR). Involved in nAChR sensitivity to nicotine and levasimole. The sequence is that of Acetylcholine receptor subunit beta-type unc-29 from Caenorhabditis elegans.